Here is a 131-residue protein sequence, read N- to C-terminus: UPF0146 protein PH0209 (131 aa).

It belongs to the UPF0146 family.

The polypeptide is UPF0146 protein PH0209 (Pyrococcus horikoshii (strain ATCC 700860 / DSM 12428 / JCM 9974 / NBRC 100139 / OT-3)).